The chain runs to 382 residues: MNGDKSTLSVIVAGGGTAGHIEPALAVADAIKAIDDTAVVTALGTARGLETTLVPERGYPLELVPPVPLPRKPTLDLLRLPGRVRASVRRTREVLDATGADVVVGFGGYVALPAYLAAGPGLLRRRRRIPIVVHEANASAGIANKIGARRAARVLAAVAGSGVSARGRSDAEILGIPVRASITGLDRSALRAEARAHFGLPADGPVLLVFGGSQGARSLNEAVSGAAESLAAAGVAVLHAHGPKNTLDVPAAPGGPPYVAVPYLSRMDLAYSAADAVICRSGAMTVAEVSAVGLPAVYVPLPHGNGEQELNARPVVAAGGGMIVADGDLSAGFVAETVIPLLRDPAQLEDMGRRAAGAGHRSAAAEVARIVIDVAAQTRGTR.

Residues 17 to 19 (TAG), N137, R179, S213, and Q308 contribute to the UDP-N-acetyl-alpha-D-glucosamine site.

This sequence belongs to the glycosyltransferase 28 family. MurG subfamily.

The protein localises to the cell membrane. It carries out the reaction di-trans,octa-cis-undecaprenyl diphospho-N-acetyl-alpha-D-muramoyl-L-alanyl-D-glutamyl-meso-2,6-diaminopimeloyl-D-alanyl-D-alanine + UDP-N-acetyl-alpha-D-glucosamine = di-trans,octa-cis-undecaprenyl diphospho-[N-acetyl-alpha-D-glucosaminyl-(1-&gt;4)]-N-acetyl-alpha-D-muramoyl-L-alanyl-D-glutamyl-meso-2,6-diaminopimeloyl-D-alanyl-D-alanine + UDP + H(+). The protein operates within cell wall biogenesis; peptidoglycan biosynthesis. In terms of biological role, cell wall formation. Catalyzes the transfer of a GlcNAc subunit on undecaprenyl-pyrophosphoryl-MurNAc-pentapeptide (lipid intermediate I) to form undecaprenyl-pyrophosphoryl-MurNAc-(pentapeptide)GlcNAc (lipid intermediate II). The protein is UDP-N-acetylglucosamine--N-acetylmuramyl-(pentapeptide) pyrophosphoryl-undecaprenol N-acetylglucosamine transferase of Rhodococcus opacus (strain B4).